Reading from the N-terminus, the 734-residue chain is Homoaconitase, mitochondrial (734 aa).

A mitochondrion-targeting transit peptide spans 1–25 (MGASNLLRFGAVTRISTPLLSRRSL). Residues cysteine 367, cysteine 427, and cysteine 430 each contribute to the [4Fe-4S] cluster site.

This sequence belongs to the aconitase/IPM isomerase family. [4Fe-4S] cluster is required as a cofactor.

It localises to the mitochondrion. The catalysed reaction is (2R,3S)-homoisocitrate = cis-homoaconitate + H2O. Its pathway is amino-acid biosynthesis; L-lysine biosynthesis via AAA pathway; L-alpha-aminoadipate from 2-oxoglutarate: step 3/5. Catalyzes the reversible hydration of cis-homoaconitate to (2R,3S)-homoisocitrate, a step in the alpha-aminoadipate pathway for lysine biosynthesis. The protein is Homoaconitase, mitochondrial (LYS4) of Mycosarcoma maydis (Corn smut fungus).